The sequence spans 154 residues: Superoxide dismutase [Cu-Zn] 1 (154 aa).

Positions 47, 49, and 64 each coordinate Cu cation. Cysteines 58 and 147 form a disulfide. 4 residues coordinate Zn(2+): His64, His72, His81, and Asp84. Residue His121 participates in Cu cation binding. Residue Arg144 coordinates substrate.

It belongs to the Cu-Zn superoxide dismutase family. In terms of assembly, homodimer. The cofactor is Cu cation. Zn(2+) is required as a cofactor.

It localises to the cytoplasm. It catalyses the reaction 2 superoxide + 2 H(+) = H2O2 + O2. Functionally, destroys radicals which are normally produced within the cells and which are toxic to biological systems. In Debaryomyces hansenii (strain ATCC 36239 / CBS 767 / BCRC 21394 / JCM 1990 / NBRC 0083 / IGC 2968) (Yeast), this protein is Superoxide dismutase [Cu-Zn] 1 (SOD1).